The chain runs to 123 residues: Large ribosomal subunit protein uL14c (123 aa).

This sequence belongs to the universal ribosomal protein uL14 family. Part of the 50S ribosomal subunit.

It localises to the plastid. It is found in the chloroplast. Its function is as follows. Binds to 23S rRNA. This is Large ribosomal subunit protein uL14c from Lolium perenne (Perennial ryegrass).